Reading from the N-terminus, the 406-residue chain is Tyrosine--tRNA ligase (406 aa).

Residue Tyr-35 participates in L-tyrosine binding. A 'HIGH' region motif is present at residues 40 to 49 (PTADSLHVGH). Residues Tyr-168 and Gln-172 each contribute to the L-tyrosine site. A 'KMSKS' region motif is present at residues 228 to 232 (KMGKT). Lys-231 lines the ATP pocket. One can recognise an S4 RNA-binding domain in the interval 340-405 (STVLDVIAKV…GKKNYNKIEI (66 aa)).

The protein belongs to the class-I aminoacyl-tRNA synthetase family. TyrS type 1 subfamily. As to quaternary structure, homodimer.

Its subcellular location is the cytoplasm. It carries out the reaction tRNA(Tyr) + L-tyrosine + ATP = L-tyrosyl-tRNA(Tyr) + AMP + diphosphate + H(+). Functionally, catalyzes the attachment of tyrosine to tRNA(Tyr) in a two-step reaction: tyrosine is first activated by ATP to form Tyr-AMP and then transferred to the acceptor end of tRNA(Tyr). The protein is Tyrosine--tRNA ligase of Clostridium botulinum (strain Eklund 17B / Type B).